The following is a 90-amino-acid chain: MGSMSIWHWVIVAVIVMLLFGRGKVSDLMGDVAKGIKAFKKGMAEDETPPAVQAAPPPAEPVRTIPHATETSPGTAIPASHLPGGERKPV.

The helical transmembrane segment at Met1–Gly21 threads the bilayer. The segment at Ala44–Val90 is disordered.

The protein belongs to the TatA/E family. In terms of assembly, the Tat system comprises two distinct complexes: a TatABC complex, containing multiple copies of TatA, TatB and TatC subunits, and a separate TatA complex, containing only TatA subunits. Substrates initially bind to the TatABC complex, which probably triggers association of the separate TatA complex to form the active translocon.

It is found in the cell inner membrane. Functionally, part of the twin-arginine translocation (Tat) system that transports large folded proteins containing a characteristic twin-arginine motif in their signal peptide across membranes. TatA could form the protein-conducting channel of the Tat system. This chain is Sec-independent protein translocase protein TatA, found in Methylobacterium radiotolerans (strain ATCC 27329 / DSM 1819 / JCM 2831 / NBRC 15690 / NCIMB 10815 / 0-1).